A 269-amino-acid chain; its full sequence is Ribonuclease HII (269 aa).

In terms of domain architecture, RNase H type-2 spans 83 to 269 (YLIAGVDEVG…HRMSFLTNIL (187 aa)). Positions 89, 90, and 185 each coordinate a divalent metal cation.

This sequence belongs to the RNase HII family. It depends on Mn(2+) as a cofactor. Mg(2+) is required as a cofactor.

The protein resides in the cytoplasm. It carries out the reaction Endonucleolytic cleavage to 5'-phosphomonoester.. Functionally, endonuclease that specifically degrades the RNA of RNA-DNA hybrids. This Clostridium botulinum (strain Loch Maree / Type A3) protein is Ribonuclease HII.